A 363-amino-acid chain; its full sequence is UDP-N-acetylglucosamine--N-acetylmuramyl-(pentapeptide) pyrophosphoryl-undecaprenol N-acetylglucosamine transferase (363 aa).

UDP-N-acetyl-alpha-D-glucosamine contacts are provided by residues 7–9, Asn125, Ser196, Ile251, and Gln296; that span reads TGG.

It belongs to the glycosyltransferase 28 family. MurG subfamily.

The protein localises to the cell membrane. It catalyses the reaction Mur2Ac(oyl-L-Ala-gamma-D-Glu-L-Lys-D-Ala-D-Ala)-di-trans,octa-cis-undecaprenyl diphosphate + UDP-N-acetyl-alpha-D-glucosamine = beta-D-GlcNAc-(1-&gt;4)-Mur2Ac(oyl-L-Ala-gamma-D-Glu-L-Lys-D-Ala-D-Ala)-di-trans,octa-cis-undecaprenyl diphosphate + UDP + H(+). It functions in the pathway cell wall biogenesis; peptidoglycan biosynthesis. In terms of biological role, cell wall formation. Catalyzes the transfer of a GlcNAc subunit on undecaprenyl-pyrophosphoryl-MurNAc-pentapeptide (lipid intermediate I) to form undecaprenyl-pyrophosphoryl-MurNAc-(pentapeptide)GlcNAc (lipid intermediate II). The protein is UDP-N-acetylglucosamine--N-acetylmuramyl-(pentapeptide) pyrophosphoryl-undecaprenol N-acetylglucosamine transferase of Latilactobacillus sakei subsp. sakei (strain 23K) (Lactobacillus sakei subsp. sakei).